The sequence spans 239 residues: Pyridoxine 5'-phosphate synthase (239 aa).

N7 provides a ligand contact to 3-amino-2-oxopropyl phosphate. 9-10 is a binding site for 1-deoxy-D-xylulose 5-phosphate; that stretch reads DH. Residue R18 participates in 3-amino-2-oxopropyl phosphate binding. The active-site Proton acceptor is the H43. Residues R45 and H50 each contribute to the 1-deoxy-D-xylulose 5-phosphate site. Catalysis depends on E70, which acts as the Proton acceptor. Position 100 (T100) interacts with 1-deoxy-D-xylulose 5-phosphate. Residue H191 is the Proton donor of the active site. 3-amino-2-oxopropyl phosphate is bound by residues G192 and 213–214; that span reads GH.

This sequence belongs to the PNP synthase family. In terms of assembly, homooctamer; tetramer of dimers.

It localises to the cytoplasm. The enzyme catalyses 3-amino-2-oxopropyl phosphate + 1-deoxy-D-xylulose 5-phosphate = pyridoxine 5'-phosphate + phosphate + 2 H2O + H(+). Its pathway is cofactor biosynthesis; pyridoxine 5'-phosphate biosynthesis; pyridoxine 5'-phosphate from D-erythrose 4-phosphate: step 5/5. In terms of biological role, catalyzes the complicated ring closure reaction between the two acyclic compounds 1-deoxy-D-xylulose-5-phosphate (DXP) and 3-amino-2-oxopropyl phosphate (1-amino-acetone-3-phosphate or AAP) to form pyridoxine 5'-phosphate (PNP) and inorganic phosphate. The protein is Pyridoxine 5'-phosphate synthase of Geotalea uraniireducens (strain Rf4) (Geobacter uraniireducens).